A 520-amino-acid polypeptide reads, in one-letter code: Probable cytochrome P450 6v1 (520 aa).

Cysteine 465 contributes to the heme binding site.

The protein belongs to the cytochrome P450 family. Heme serves as cofactor.

The protein localises to the endoplasmic reticulum membrane. It localises to the microsome membrane. In terms of biological role, may be involved in the metabolism of insect hormones and in the breakdown of synthetic insecticides. The polypeptide is Probable cytochrome P450 6v1 (Cyp6v1) (Drosophila melanogaster (Fruit fly)).